Here is a 270-residue protein sequence, read N- to C-terminus: MYGTRSSAYWSTQPGKFDVLNLRMTFPSSSAYEIPDLRPTTYVPANLAAWNMPRHREYAAVSGGALHFFLDDYRFETVWSSPERLLPRVQAVGAALTPDFSLWRDMPRAAAVWNVYRSRWCGAYWQSQGIEVLPTACWATPDTFDFCFDGIPEGATVAISSMGIRSSKVDQALFRAGLQELLDRKQPRLLLAYGRLRYCDDMNLPEVKEYPTYWDRRRKQVSDAWAEEDPPVAAVPLEPEDATAPGKEPGQAAWVDLEAAVEPPEAAGAV.

Positions 225 to 249 are disordered; sequence WAEEDPPVAAVPLEPEDATAPGKEP.

The sequence is that of Gene 1 protein (1) from Mycobacterium (Mycobacteriophage D29).